The chain runs to 772 residues: MSSTAQKNSLSPTGNGVTKRKSGSAACVHCHRRKVRCDARIVGLPCSNCRSSGKTDCRIHEKKKRLAVRSILNPVPIRCRPPSTSEHVPEASPPSTISEPTAFTTAFRGVQPEAAAPPASVAPNVQSKAQHLHSNSYSQTSPQAQECHLPPASDRFAEQDAHADFEKRLVKLIDDEEGSGPREIQRGVRAIYVGHELSNMSFLIRQQRDKDDDVYHFAGSEIPRRQLKTGHDQLLVDALTLPEPALVDELVQAYFTHVNPGYPIVEEDQFMSQYRNRDPSDPPPILLLQAILLVGCHVTHPKEERDALKAIFFRRAKWLFDNRIERNRDTLVQAALLLTWHSDSPDDDVSANAHYWVGVAARIATGLGMHRNPVSSRFAPRDRRMWRRLWYILVQLDVMVSLSYGRPQAINLEDSDVSPLTASDFEGCGARVQTDYVIHFSELCTMISYIVRERFGLRVSSERRKAALQEADEALANWSLRLPDHLRLRASDMDPWSAMLHLTYNNFLILLHRPHPRASAYSDDYGPHDAEICSAAAGVITSIFEELRLNDRLKYLWYSGVHTLFTAMIQVRVELRFSNPVLAINALRRFDSASCSLRELAKYWSHATTILRLFEDSKRLQKDLRLATSERSRPFSSTQDQPQAQALDQNKNQHQHSSADAPVQPPQPDRLLPSYDSPTPDSTSLPQTAVSPHQNLTFDSWIPSTNLATVDPMDQPREFLDWRQLFSFTDPDQPVLPMSMDGLPELEDEWRQIYWQETPMSDLLQDGGWMHG.

Positions 1-16 are enriched in polar residues; it reads MSSTAQKNSLSPTGNG. Residues 1–23 are disordered; it reads MSSTAQKNSLSPTGNGVTKRKSG. Positions 26–59 form a DNA-binding region, zn(2)-C6 fungal-type; the sequence is ACVHCHRRKVRCDARIVGLPCSNCRSSGKTDCRI. Disordered regions lie at residues 78–99, 114–148, and 627–690; these read RCRP…TISE, AAAP…QECH, and ATSE…QTAV. Residues 114–123 show a composition bias toward low complexity; it reads AAAPPASVAP. 2 stretches are compositionally biased toward polar residues: residues 124-144 and 634-658; these read NVQS…SPQA and PFSS…QHSS. Over residues 671–686 the composition is skewed to low complexity; the sequence is LLPSYDSPTPDSTSLP.

It localises to the nucleus. Functionally, positively regulates the expression of genes involved in the catabolism of certain amides, omega amino acids, and lactams. The chain is Acetamidase regulatory protein (amdR) from Aspergillus fumigatus (strain ATCC MYA-4609 / CBS 101355 / FGSC A1100 / Af293) (Neosartorya fumigata).